We begin with the raw amino-acid sequence, 517 residues long: T-box transcription factor TBX22 (517 aa).

Residues 1–83 (MALSSRAHAF…SDESNSQESL (83 aa)) form a disordered region. Acidic residues predominate over residues 35–45 (LQEEQFVEEGE). The segment covering 46–66 (EILRSPSRDSQQPEKRLKAES) has biased composition (basic and acidic residues). Residues 74 to 83 (SDESNSQESL) show a composition bias toward low complexity. Positions 93-280 (LQGSDLWKRF…RNPFAKGFRD (188 aa)) form a DNA-binding region, T-box. Residues 312 to 333 (TQSGSSGSSPVTSSGGAPSPLN) form a disordered region. The segment covering 314-333 (SGSSGSSPVTSSGGAPSPLN) has biased composition (low complexity).

Its subcellular location is the nucleus. Functionally, probable transcriptional regulator involved in developmental processes. This is major determinant crucial to palatogenesis. The protein is T-box transcription factor TBX22 (Tbx22) of Mus musculus (Mouse).